The sequence spans 96 residues: Large ribosomal subunit protein uL23 (96 aa).

This sequence belongs to the universal ribosomal protein uL23 family. Part of the 50S ribosomal subunit. Contacts protein L29, and trigger factor when it is bound to the ribosome.

Functionally, one of the early assembly proteins it binds 23S rRNA. One of the proteins that surrounds the polypeptide exit tunnel on the outside of the ribosome. Forms the main docking site for trigger factor binding to the ribosome. The protein is Large ribosomal subunit protein uL23 of Nitratidesulfovibrio vulgaris (strain ATCC 29579 / DSM 644 / CCUG 34227 / NCIMB 8303 / VKM B-1760 / Hildenborough) (Desulfovibrio vulgaris).